Consider the following 297-residue polypeptide: Transmembrane protein 169 (297 aa).

Residues 1–84 form a disordered region; it reads MEEPALVEGQ…PKEEEGDDFI (84 aa). The Extracellular portion of the chain corresponds to 1-159; sequence MEEPALVEGQ…CQLGADRGPH (159 aa). Residues 9 to 18 are compositionally biased toward polar residues; the sequence is GQSQLPSPHH. Positions 60 to 84 are enriched in acidic residues; sequence ETLDEEPGESEGGDQPKEEEGDDFI. The chain crosses the membrane as a helical span at residues 160–180; that stretch reads VVLWTLVCLPVVFLLSFVVSF. At 181–210 the chain is on the cytoplasmic side; it reads YYGTITWYNIFLVYNEERTFWHKISCCPCL. A helical membrane pass occupies residues 211–231; sequence ILCYPVLIMAMASSLGLYAAV. The Extracellular segment spans residues 232–297; sequence VQLSWSWEAW…ATQEIETSAV (66 aa).

It localises to the membrane. This Bos taurus (Bovine) protein is Transmembrane protein 169 (TMEM169).